Here is a 389-residue protein sequence, read N- to C-terminus: Chitinase-3-like protein 1 (389 aa).

The first 29 residues, 1–29 (MHTSTEARMGMRAALTGFAVLMLLQSCSA), serve as a signal peptide directing secretion. The region spanning 30-389 (YKLVCYFTSW…LTNAIKDALA (360 aa)) is the GH18 domain. Residues cysteine 34 and cysteine 59 are joined by a disulfide bond. N-linked (GlcNAc...) asparagine glycosylation is present at asparagine 68. Chitin-binding positions include 79–80 (EW), 106–109 (GGWK), tyrosine 150, and 213–216 (MTYD). A disulfide bridge connects residues cysteine 309 and cysteine 372. The interval 333 to 347 (QWVGYEDKESVKNKV) is important for AKT1 activation and IL8 production. A chitin-binding site is contributed by tryptophan 361.

The protein belongs to the glycosyl hydrolase 18 family. In terms of assembly, monomer. As to expression, detected in lung in pulmonary macrophages and alveolar type 2 cells and in bronchoalveolar lavage (BAL) fluids. Expressed in mammary tumor cells (at protein level). Expressed in lung. Not detected in non-inflammatory colon.

It is found in the secreted. It localises to the extracellular space. The protein resides in the cytoplasm. The protein localises to the endoplasmic reticulum. In terms of biological role, carbohydrate-binding lectin with a preference for chitin. Has no chitinase activity. May play a role in tissue remodeling and in the capacity of cells to respond to and cope with changes in their environment. Plays a role in T-helper cell type 2 (Th2) inflammatory response and IL-13-induced inflammation, regulating allergen sensitization, inflammatory cell apoptosis, dendritic cell accumulation and M2 macrophage differentiation. Facilitates invasion of pathogenic enteric bacteria into colonic mucosa and lymphoid organs. Mediates activation of AKT1 signaling pathway and subsequent IL8 production in colonic epithelial cells. Regulates antibacterial responses in lung by contributing to macrophage bacterial killing, controlling bacterial dissemination and augmenting host tolerance. Also regulates hyperoxia-induced injury, inflammation and epithelial apoptosis in lung. In Mus musculus (Mouse), this protein is Chitinase-3-like protein 1 (Chi3l1).